The sequence spans 195 residues: MISTDAVAPAVDVKGEAGDRAATGNIFLVGMMGAGKTTVGRLLSHFLEKTFYDSDREIQKRTGVSIPTIFEIEGEEGFRRRETEILSELMNARNIILATGGGAVLSGVNRAMLKHGGTVIYLRASIDDLWRRTRHDKNRPLLQTSDPRARLAELFVQRDPLYRETAHIVVESGKRSPRHLAQSLAQQLTISSRTG.

33–38 (GAGKTT) is a binding site for ATP. Thr-37 provides a ligand contact to Mg(2+). Substrate-binding residues include Asp-55, Arg-79, and Gly-101. Residue Arg-139 participates in ATP binding. Position 158 (Arg-158) interacts with substrate. Arg-175 serves as a coordination point for ATP.

The protein belongs to the shikimate kinase family. Monomer. Mg(2+) is required as a cofactor.

The protein localises to the cytoplasm. The enzyme catalyses shikimate + ATP = 3-phosphoshikimate + ADP + H(+). It participates in metabolic intermediate biosynthesis; chorismate biosynthesis; chorismate from D-erythrose 4-phosphate and phosphoenolpyruvate: step 5/7. In terms of biological role, catalyzes the specific phosphorylation of the 3-hydroxyl group of shikimic acid using ATP as a cosubstrate. This is Shikimate kinase from Nitrosospira multiformis (strain ATCC 25196 / NCIMB 11849 / C 71).